The sequence spans 110 residues: Hydrogenase maturation factor HypA (110 aa).

His2 is a binding site for Ni(2+). Residues Cys73, Cys76, Cys87, and Cys89 each contribute to the Zn(2+) site.

It belongs to the HypA/HybF family.

In terms of biological role, involved in the maturation of [NiFe] hydrogenases. Required for nickel insertion into the metal center of the hydrogenase. The polypeptide is Hydrogenase maturation factor HypA (Archaeoglobus fulgidus (strain ATCC 49558 / DSM 4304 / JCM 9628 / NBRC 100126 / VC-16)).